The sequence spans 339 residues: Adenosine deaminase (339 aa).

Residues His-15 and His-17 each contribute to the Zn(2+) site. Residues His-17, Asp-19, and Gly-172 each contribute to the substrate site. His-199 is a Zn(2+) binding site. Glu-202 functions as the Proton donor in the catalytic mechanism. Asp-279 serves as a coordination point for Zn(2+).

The protein belongs to the metallo-dependent hydrolases superfamily. Adenosine and AMP deaminases family. Adenosine deaminase subfamily. The cofactor is Zn(2+).

It carries out the reaction adenosine + H2O + H(+) = inosine + NH4(+). The enzyme catalyses 2'-deoxyadenosine + H2O + H(+) = 2'-deoxyinosine + NH4(+). Its function is as follows. Catalyzes the hydrolytic deamination of adenosine and 2-deoxyadenosine. The chain is Adenosine deaminase from Lacticaseibacillus paracasei (strain ATCC 334 / BCRC 17002 / CCUG 31169 / CIP 107868 / KCTC 3260 / NRRL B-441) (Lactobacillus paracasei).